Here is a 294-residue protein sequence, read N- to C-terminus: Probable 2-(5''-triphosphoribosyl)-3'-dephosphocoenzyme-A synthase (294 aa).

It belongs to the CitG/MdcB family.

It catalyses the reaction 3'-dephospho-CoA + ATP = 2'-(5''-triphospho-alpha-D-ribosyl)-3'-dephospho-CoA + adenine. This is Probable 2-(5''-triphosphoribosyl)-3'-dephosphocoenzyme-A synthase from Streptococcus pyogenes serotype M28 (strain MGAS6180).